We begin with the raw amino-acid sequence, 271 residues long: Dehydrodolichyl diphosphate synthase 7 (271 aa).

The chain crosses the membrane as a helical span at residues 24 to 41; it reads FLFRVLCVGPIPTNISFI.

The protein belongs to the UPP synthase family. Mg(2+) serves as cofactor.

It is found in the endoplasmic reticulum membrane. The protein operates within protein modification; protein glycosylation. Functionally, catalyzes cis-prenyl chain elongation to produce the polyprenyl backbone of dolichol, a glycosyl carrier-lipid required for the biosynthesis of several classes of glycoprotein. The polypeptide is Dehydrodolichyl diphosphate synthase 7 (Arabidopsis thaliana (Mouse-ear cress)).